Reading from the N-terminus, the 103-residue chain is Small ribosomal subunit protein uS10 (103 aa).

Belongs to the universal ribosomal protein uS10 family. Part of the 30S ribosomal subunit.

Functionally, involved in the binding of tRNA to the ribosomes. The sequence is that of Small ribosomal subunit protein uS10 from Psychrobacter arcticus (strain DSM 17307 / VKM B-2377 / 273-4).